The primary structure comprises 537 residues: NEDD4-binding protein 3 (537 aa).

Phosphoserine is present on Ser172. 3 disordered regions span residues 173–234 (LDEG…VLSC), 328–361 (KELR…EARW), and 423–458 (QEQA…REGA). Positions 178-207 (PEPSLSDSSSGGSFGRSPGTGPSPFSSSLG) are enriched in low complexity. Residues 295–501 (VERLHEVAQK…RVLRYQREIQ (207 aa)) adopt a coiled-coil conformation. Residues 351–361 (PNARPEEEARW) are compositionally biased toward basic and acidic residues.

This sequence belongs to the N4BP3 family. Binds NEDD4. Interacts with 14-3-3 proteins. Interacts with MAVS.

The protein resides in the cytoplasmic vesicle. Its subcellular location is the cell projection. The protein localises to the axon. It localises to the dendrite. Functionally, plays a positive role in the antiviral innate immune signaling pathway. Mechanistically, interacts with MAVS and functions as a positive regulator to promote 'Lys-63'-linked polyubiquitination of MAVS and thus strengthens the interaction between MAVS and TRAF2. Also plays a role in axon and dendrite arborization during cranial nerve development. May also be important for neural crest migration and early development of other anterior structures including eye, brain and cranial cartilage. In Mus musculus (Mouse), this protein is NEDD4-binding protein 3 (N4bp3).